Consider the following 983-residue polypeptide: Glycine dehydrogenase (decarboxylating) (983 aa).

The residue at position 726 (Lys-726) is an N6-(pyridoxal phosphate)lysine.

The protein belongs to the GcvP family. The glycine cleavage system is composed of four proteins: P, T, L and H. Pyridoxal 5'-phosphate serves as cofactor.

The enzyme catalyses N(6)-[(R)-lipoyl]-L-lysyl-[glycine-cleavage complex H protein] + glycine + H(+) = N(6)-[(R)-S(8)-aminomethyldihydrolipoyl]-L-lysyl-[glycine-cleavage complex H protein] + CO2. Its function is as follows. The glycine cleavage system catalyzes the degradation of glycine. The P protein binds the alpha-amino group of glycine through its pyridoxal phosphate cofactor; CO(2) is released and the remaining methylamine moiety is then transferred to the lipoamide cofactor of the H protein. The sequence is that of Glycine dehydrogenase (decarboxylating) from Synechocystis sp. (strain ATCC 27184 / PCC 6803 / Kazusa).